A 1156-amino-acid polypeptide reads, in one-letter code: GPI inositol-deacylase (1156 aa).

The interval 1-95 (MHRRSSGSPV…AMATASTETK (95 aa)) is disordered. Composition is skewed to polar residues over residues 20–37 (VSRS…NNAF) and 61–72 (GASTPRSRNSGL). Residues 75 to 95 (TPSSSSTSSTTAMATASTETK) are compositionally biased toward low complexity. The chain crosses the membrane as a helical span at residues 131-151 (TCSILTALTTLVASVFLFFIV). The active site involves S318. 2 helical membrane-spanning segments follow: residues 797–817 (LVMR…ALVL) and 845–865 (FPIL…SAQI). A glycan (N-linked (GlcNAc...) asparagine) is linked at N877. 2 helical membrane-spanning segments follow: residues 897-917 (AFFW…CVIL) and 966-986 (ILLV…VACI). A glycan (N-linked (GlcNAc...) asparagine) is linked at N1009. Transmembrane regions (helical) follow at residues 1016 to 1036 (SIFI…LVWA), 1053 to 1073 (VLSI…AMIP), 1081 to 1101 (HVTS…GVSY), and 1102 to 1122 (AYLL…IYFF).

The protein belongs to the GPI inositol-deacylase family.

It is found in the endoplasmic reticulum membrane. Functionally, involved in inositol deacylation of GPI-anchored proteins which plays important roles in the quality control and ER-associated degradation of GPI-anchored proteins. In Aspergillus fumigatus (strain ATCC MYA-4609 / CBS 101355 / FGSC A1100 / Af293) (Neosartorya fumigata), this protein is GPI inositol-deacylase (bst1).